We begin with the raw amino-acid sequence, 459 residues long: Heat stress transcription factor A-4d (459 aa).

Residues 127–189 (AESERRELEE…QKNIVASLCE (63 aa)) are a coiled coil. Residues 141–191 (LKYEKSILVADLQRQNQQQYVINWQMQAMEGRLVAMEQRQKNIVASLCEML) form a hydrophobic repeat HR-A/B region. Residues 209–213 (SKKRR) carry the Nuclear localization signal motif. Residues 364–388 (YPTQADVNSEIASSTDTSQDGTSET) show a composition bias toward polar residues. The disordered stretch occupies residues 364-398 (YPTQADVNSEIASSTDTSQDGTSETEASHGPTNDV). The short motif at 397–406 (DVFWERFLTE) is the AHA element.

This sequence belongs to the HSF family. Class A subfamily. As to quaternary structure, homotrimer. Post-translationally, exhibits temperature-dependent phosphorylation.

It is found in the nucleus. Transcriptional regulator that specifically binds DNA of heat shock promoter elements (HSE). This is Heat stress transcription factor A-4d (HSFA4D) from Oryza sativa subsp. japonica (Rice).